We begin with the raw amino-acid sequence, 340 residues long: Ketol-acid reductoisomerase (NADP(+)) (340 aa).

The 181-residue stretch at 2 to 182 (AELYYDNQAD…GCTRAGVLRT (181 aa)) folds into the KARI N-terminal Rossmann domain. NADP(+) is bound by residues 25-28 (FGSQ), Ser51, Ser53, and 83-86 (DIGQ). His108 is an active-site residue. Gly134 provides a ligand contact to NADP(+). Residues 183-328 (TFAEETETDL…RELRRMMPFV (146 aa)) enclose the KARI C-terminal knotted domain. Asp191, Glu195, Glu227, and Glu231 together coordinate Mg(2+). Residue Ser252 participates in substrate binding.

It belongs to the ketol-acid reductoisomerase family. It depends on Mg(2+) as a cofactor.

The catalysed reaction is (2R)-2,3-dihydroxy-3-methylbutanoate + NADP(+) = (2S)-2-acetolactate + NADPH + H(+). The enzyme catalyses (2R,3R)-2,3-dihydroxy-3-methylpentanoate + NADP(+) = (S)-2-ethyl-2-hydroxy-3-oxobutanoate + NADPH + H(+). It functions in the pathway amino-acid biosynthesis; L-isoleucine biosynthesis; L-isoleucine from 2-oxobutanoate: step 2/4. It participates in amino-acid biosynthesis; L-valine biosynthesis; L-valine from pyruvate: step 2/4. Involved in the biosynthesis of branched-chain amino acids (BCAA). Catalyzes an alkyl-migration followed by a ketol-acid reduction of (S)-2-acetolactate (S2AL) to yield (R)-2,3-dihydroxy-isovalerate. In the isomerase reaction, S2AL is rearranged via a Mg-dependent methyl migration to produce 3-hydroxy-3-methyl-2-ketobutyrate (HMKB). In the reductase reaction, this 2-ketoacid undergoes a metal-dependent reduction by NADPH to yield (R)-2,3-dihydroxy-isovalerate. The chain is Ketol-acid reductoisomerase (NADP(+)) from Chloroflexus aggregans (strain MD-66 / DSM 9485).